The primary structure comprises 264 residues: Glutamate racemase (264 aa).

Residues 10–11 and 42–43 contribute to the substrate site; these read DS and YG. Catalysis depends on C73, which acts as the Proton donor/acceptor. Residue 74–75 participates in substrate binding; the sequence is NT. C183 acts as the Proton donor/acceptor in catalysis. Substrate is bound at residue 184 to 185; it reads TH.

Belongs to the aspartate/glutamate racemases family.

It carries out the reaction L-glutamate = D-glutamate. It participates in cell wall biogenesis; peptidoglycan biosynthesis. In terms of biological role, provides the (R)-glutamate required for cell wall biosynthesis. This Streptococcus suis (strain 98HAH33) protein is Glutamate racemase.